A 425-amino-acid polypeptide reads, in one-letter code: Argininosuccinate synthase (425 aa).

ATP contacts are provided by residues 7–15 (AYSGGLDTS) and A33. An L-citrulline-binding site is contributed by Y84. ATP is bound at residue G114. L-aspartate-binding residues include T116, N120, and D121. L-citrulline is bound at residue N120. R124, S177, S186, E267, and Y279 together coordinate L-citrulline.

Belongs to the argininosuccinate synthase family. Type 1 subfamily. As to quaternary structure, homotetramer.

The protein resides in the cytoplasm. It carries out the reaction L-citrulline + L-aspartate + ATP = 2-(N(omega)-L-arginino)succinate + AMP + diphosphate + H(+). It participates in amino-acid biosynthesis; L-arginine biosynthesis; L-arginine from L-ornithine and carbamoyl phosphate: step 2/3. This Pseudothermotoga lettingae (strain ATCC BAA-301 / DSM 14385 / NBRC 107922 / TMO) (Thermotoga lettingae) protein is Argininosuccinate synthase.